A 254-amino-acid polypeptide reads, in one-letter code: 3-deoxy-manno-octulosonate cytidylyltransferase (254 aa).

This sequence belongs to the KdsB family.

The protein localises to the cytoplasm. It carries out the reaction 3-deoxy-alpha-D-manno-oct-2-ulosonate + CTP = CMP-3-deoxy-beta-D-manno-octulosonate + diphosphate. It participates in nucleotide-sugar biosynthesis; CMP-3-deoxy-D-manno-octulosonate biosynthesis; CMP-3-deoxy-D-manno-octulosonate from 3-deoxy-D-manno-octulosonate and CTP: step 1/1. The protein operates within bacterial outer membrane biogenesis; lipopolysaccharide biosynthesis. In terms of biological role, activates KDO (a required 8-carbon sugar) for incorporation into bacterial lipopolysaccharide in Gram-negative bacteria. This Porphyromonas gingivalis (strain ATCC BAA-308 / W83) protein is 3-deoxy-manno-octulosonate cytidylyltransferase.